Consider the following 436-residue polypeptide: Trigger factor (436 aa).

The region spanning Glu161–Pro246 is the PPIase FKBP-type domain.

Belongs to the FKBP-type PPIase family. Tig subfamily.

Its subcellular location is the cytoplasm. It carries out the reaction [protein]-peptidylproline (omega=180) = [protein]-peptidylproline (omega=0). Functionally, involved in protein export. Acts as a chaperone by maintaining the newly synthesized protein in an open conformation. Functions as a peptidyl-prolyl cis-trans isomerase. This is Trigger factor from Pseudomonas savastanoi pv. phaseolicola (strain 1448A / Race 6) (Pseudomonas syringae pv. phaseolicola (strain 1448A / Race 6)).